We begin with the raw amino-acid sequence, 143 residues long: Hemoglobin subunit alpha (143 aa).

Ser-2 carries the N-acetylserine modification. The Globin domain occupies 2–143 (SLSDKDKAAV…LALALSEKYR (142 aa)). His-60 is an O2 binding site. His-89 lines the heme b pocket.

The protein belongs to the globin family. Heterotetramer of two alpha chains and two beta chains. Red blood cells.

In terms of biological role, involved in oxygen transport from gills to the various peripheral tissues. The chain is Hemoglobin subunit alpha (hba) from Cyprinus carpio (Common carp).